Reading from the N-terminus, the 179-residue chain is Ubiquitin-conjugating enzyme E2 C (179 aa).

The interval 1-31 is disordered; sequence MASQNRDPVAASVAAARKGAEPSGGAARGPV. Residue Ala2 is modified to N-acetylalanine. A Phosphoserine modification is found at Ser3. Residues 30–175 form the UBC core domain; sequence PVGKRLQQEL…LQETYSKQVS (146 aa). The Glycyl thioester intermediate role is filled by Cys114.

Belongs to the ubiquitin-conjugating enzyme family. Component of the APC/C complex, composed of at least 14 distinct subunits that assemble into a complex of at least 19 chains with a combined molecular mass of around 1.2 MDa. Within this complex, directly interacts with ANAPC2. Autoubiquitinated by the APC/C complex, leading to its degradation by the proteasome. Its degradation plays a central role in APC/C regulation, allowing cyclin-A accumulation before S phase entry. APC/C substrates inhibit the autoubiquitination of UBE2C/UBCH10 but not its E2 function, hence APC/C remaining active until its substrates have been destroyed.

The enzyme catalyses S-ubiquitinyl-[E1 ubiquitin-activating enzyme]-L-cysteine + [E2 ubiquitin-conjugating enzyme]-L-cysteine = [E1 ubiquitin-activating enzyme]-L-cysteine + S-ubiquitinyl-[E2 ubiquitin-conjugating enzyme]-L-cysteine.. It carries out the reaction S-ubiquitinyl-[E1 ubiquitin-activating enzyme]-L-cysteine + [acceptor protein]-L-lysine = [E1 ubiquitin-activating enzyme]-L-cysteine + N(6)-monoubiquitinyl-[acceptor protein]-L-lysine.. It participates in protein modification; protein ubiquitination. Functionally, accepts ubiquitin from the E1 complex and catalyzes its covalent attachment to other proteins. In vitro catalyzes 'Lys-11'- and 'Lys-48'-linked polyubiquitination. Acts as an essential factor of the anaphase promoting complex/cyclosome (APC/C), a cell cycle-regulated ubiquitin ligase that controls progression through mitosis. Acts by initiating 'Lys-11'-linked polyubiquitin chains on APC/C substrates, leading to the degradation of APC/C substrates by the proteasome and promoting mitotic exit. The protein is Ubiquitin-conjugating enzyme E2 C (UBE2C) of Bos taurus (Bovine).